A 37-amino-acid chain; its full sequence is MKVRASVKKMCRNCKVIKRNRVVRVICADPRHKQRQG.

This sequence belongs to the bacterial ribosomal protein bL36 family.

This is Large ribosomal subunit protein bL36 from Francisella tularensis subsp. mediasiatica (strain FSC147).